Here is a 261-residue protein sequence, read N- to C-terminus: 5'-nucleotidase SurE (261 aa).

Residues aspartate 8, aspartate 9, serine 43, and asparagine 96 each contribute to the a divalent metal cation site.

This sequence belongs to the SurE nucleotidase family. Requires a divalent metal cation as cofactor.

Its subcellular location is the cytoplasm. The catalysed reaction is a ribonucleoside 5'-phosphate + H2O = a ribonucleoside + phosphate. Functionally, nucleotidase that shows phosphatase activity on nucleoside 5'-monophosphates. The protein is 5'-nucleotidase SurE of Roseobacter denitrificans (strain ATCC 33942 / OCh 114) (Erythrobacter sp. (strain OCh 114)).